The following is a 123-amino-acid chain: Small ribosomal subunit protein uS12 (123 aa).

The interval 1-28 is disordered; it reads MPTIQQLIRNPREPKRTRTKTPALKACP. Aspartate 89 is modified (3-methylthioaspartic acid). The tract at residues 104–123 is disordered; it reads TQPVKNRKQRRSHYGAKKPK. Residues 108–123 show a composition bias toward basic residues; that stretch reads KNRKQRRSHYGAKKPK.

It belongs to the universal ribosomal protein uS12 family. In terms of assembly, part of the 30S ribosomal subunit. Contacts proteins S8 and S17. May interact with IF1 in the 30S initiation complex.

Functionally, with S4 and S5 plays an important role in translational accuracy. In terms of biological role, interacts with and stabilizes bases of the 16S rRNA that are involved in tRNA selection in the A site and with the mRNA backbone. Located at the interface of the 30S and 50S subunits, it traverses the body of the 30S subunit contacting proteins on the other side and probably holding the rRNA structure together. The combined cluster of proteins S8, S12 and S17 appears to hold together the shoulder and platform of the 30S subunit. This chain is Small ribosomal subunit protein uS12, found in Hyphomonas neptunium (strain ATCC 15444).